A 130-amino-acid chain; its full sequence is Small ribosomal subunit protein uS11 (130 aa).

This sequence belongs to the universal ribosomal protein uS11 family. Part of the 30S ribosomal subunit. Interacts with proteins S7 and S18. Binds to IF-3.

Located on the platform of the 30S subunit, it bridges several disparate RNA helices of the 16S rRNA. Forms part of the Shine-Dalgarno cleft in the 70S ribosome. This chain is Small ribosomal subunit protein uS11, found in Dehalococcoides mccartyi (strain ATCC BAA-2266 / KCTC 15142 / 195) (Dehalococcoides ethenogenes (strain 195)).